A 165-amino-acid polypeptide reads, in one-letter code: Thiol peroxidase (165 aa).

A Thioredoxin domain is found at 18–165; sequence PQVGDNLAEF…DYDAALAALN (148 aa). Catalysis depends on C60, which acts as the Cysteine sulfenic acid (-SOH) intermediate. A disulfide bridge connects residues C60 and C94.

Belongs to the peroxiredoxin family. Tpx subfamily. In terms of assembly, homodimer.

It carries out the reaction a hydroperoxide + [thioredoxin]-dithiol = an alcohol + [thioredoxin]-disulfide + H2O. Thiol-specific peroxidase that catalyzes the reduction of hydrogen peroxide and organic hydroperoxides to water and alcohols, respectively. Plays a role in cell protection against oxidative stress by detoxifying peroxides. The sequence is that of Thiol peroxidase from Corynebacterium glutamicum (strain ATCC 13032 / DSM 20300 / JCM 1318 / BCRC 11384 / CCUG 27702 / LMG 3730 / NBRC 12168 / NCIMB 10025 / NRRL B-2784 / 534).